A 171-amino-acid polypeptide reads, in one-letter code: Co-chaperone protein HscB homolog (171 aa).

Residues 3–75 (SHFALFDLEP…SQRARYLLSL (73 aa)) enclose the J domain.

It belongs to the HscB family. In terms of assembly, interacts with HscA and stimulates its ATPase activity.

Functionally, co-chaperone involved in the maturation of iron-sulfur cluster-containing proteins. Seems to help targeting proteins to be folded toward HscA. This Azotobacter vinelandii protein is Co-chaperone protein HscB homolog.